The chain runs to 126 residues: Large ribosomal subunit protein bL12 (126 aa).

It belongs to the bacterial ribosomal protein bL12 family. As to quaternary structure, homodimer. Part of the ribosomal stalk of the 50S ribosomal subunit. Forms a multimeric L10(L12)X complex, where L10 forms an elongated spine to which 2 to 4 L12 dimers bind in a sequential fashion. Binds GTP-bound translation factors.

Its function is as follows. Forms part of the ribosomal stalk which helps the ribosome interact with GTP-bound translation factors. Is thus essential for accurate translation. This chain is Large ribosomal subunit protein bL12, found in Legionella pneumophila (strain Paris).